The chain runs to 190 residues: Potassium-transporting ATPase KdpC subunit (190 aa).

A helical transmembrane segment spans residues 15–35 (LWILTALIYPAIVLVIGQLVF).

The protein belongs to the KdpC family. As to quaternary structure, the system is composed of three essential subunits: KdpA, KdpB and KdpC.

The protein resides in the cell inner membrane. In terms of biological role, part of the high-affinity ATP-driven potassium transport (or Kdp) system, which catalyzes the hydrolysis of ATP coupled with the electrogenic transport of potassium into the cytoplasm. This subunit acts as a catalytic chaperone that increases the ATP-binding affinity of the ATP-hydrolyzing subunit KdpB by the formation of a transient KdpB/KdpC/ATP ternary complex. The protein is Potassium-transporting ATPase KdpC subunit of Synechocystis sp. (strain ATCC 27184 / PCC 6803 / Kazusa).